Here is a 153-residue protein sequence, read N- to C-terminus: SsrA-binding protein (153 aa).

This sequence belongs to the SmpB family.

It is found in the cytoplasm. Required for rescue of stalled ribosomes mediated by trans-translation. Binds to transfer-messenger RNA (tmRNA), required for stable association of tmRNA with ribosomes. tmRNA and SmpB together mimic tRNA shape, replacing the anticodon stem-loop with SmpB. tmRNA is encoded by the ssrA gene; the 2 termini fold to resemble tRNA(Ala) and it encodes a 'tag peptide', a short internal open reading frame. During trans-translation Ala-aminoacylated tmRNA acts like a tRNA, entering the A-site of stalled ribosomes, displacing the stalled mRNA. The ribosome then switches to translate the ORF on the tmRNA; the nascent peptide is terminated with the 'tag peptide' encoded by the tmRNA and targeted for degradation. The ribosome is freed to recommence translation, which seems to be the essential function of trans-translation. This chain is SsrA-binding protein, found in Pelotomaculum thermopropionicum (strain DSM 13744 / JCM 10971 / SI).